The chain runs to 670 residues: Serine/threonine-rich protein adg2 (670 aa).

The first 19 residues, 1-19 (MRRLTISGLLISLAKLCAG), serve as a signal peptide directing secretion. N77, N159, N204, N224, N274, N297, N327, N351, N370, N381, N405, N424, N435, N459, N478, N489, and N513 each carry an N-linked (GlcNAc...) asparagine glycan. A disordered region spans residues 526–651 (GSVSSFSSSP…MSLPPSAGSS (126 aa)).

The protein localises to the secreted. It localises to the endoplasmic reticulum. This chain is Serine/threonine-rich protein adg2 (adg2), found in Schizosaccharomyces pombe (strain 972 / ATCC 24843) (Fission yeast).